A 302-amino-acid chain; its full sequence is Zinc finger protein-like 1 homolog (302 aa).

The B box-type; degenerate zinc finger occupies 1-43; that stretch reads MGLCKCPKRLVTNQFCFEHRVNVCEHCMVQSHPKCIVQSYLQW. The segment at 53 to 101 adopts an RING-type; atypical zinc-finger fold; it reads CNLCGTSLEQGECVRLVCYHVFHWDCLNARQAALPANTAPRGHQCPGCS. Residues 168–233 are disordered; sequence IHSGGERERG…RDDNKYQRRT (66 aa). Residues 198-208 show a composition bias toward polar residues; that stretch reads PPSSGDFNASS. Ser217 is subject to Phosphoserine. A helical transmembrane segment spans residues 258 to 278; the sequence is WFLVLSGILAFVMFIYLLAWM.

Belongs to the ZFPL1 family.

It localises to the membrane. The polypeptide is Zinc finger protein-like 1 homolog (Drosophila pseudoobscura pseudoobscura (Fruit fly)).